The following is a 443-amino-acid chain: Putative transporter AmpG 1 (443 aa).

13 helical membrane passes run 5–25, 42–62, 78–98, 104–124, 143–163, 171–191, 230–250, 254–274, 299–319, 324–344, 354–374, 393–413, and 415–435; these read SHIY…MITG, IGML…APVF, LSWI…LSFL, LVLL…QDTI, GIYI…AIYL, AIYK…ILVA, FNYF…GFYF, DINL…YRLP, VCKF…GIIM, ILYS…FFIL, ILFI…TAYI, LSSM…YMVV, and FGWQ…LLIL.

Belongs to the major facilitator superfamily.

It is found in the cell inner membrane. This chain is Putative transporter AmpG 1 (ampG1), found in Rickettsia prowazekii (strain Madrid E).